The primary structure comprises 218 residues: Host range factor 1 (218 aa).

Facilitates AcMNPV replication in two non-permissive cell lines, IPLB-Ld652Y and IPLB-LdFB. This Lepidoptera (butterflies and moths) protein is Host range factor 1 (HRF-1).